Here is a 1402-residue protein sequence, read N- to C-terminus: Phospholipid-transporting ATPase dnf2 (1402 aa).

Helical transmembrane passes span 109–129, 135–155, 457–477, and 501–521; these read FQNV…ISIF, PGLA…KDAI, LNFI…GIAW, and VVTF…SLYI. Residue Asp-569 is the 4-aspartylphosphate intermediate of the active site. Residues Asp-569, Lys-570, Thr-571, Glu-700, Phe-741, Ser-743, Lys-746, Lys-764, Arg-799, Thr-800, Thr-879, Gly-880, Asp-881, Arg-986, and Lys-992 each coordinate ATP. Asp-569 is a Mg(2+) binding site. Thr-571 contributes to the Mg(2+) binding site. Residue Asp-1012 participates in Mg(2+) binding. ATP contacts are provided by Asn-1015 and Asp-1016. Asp-1016 contacts Mg(2+). 6 consecutive transmembrane segments (helical) span residues 1066–1086, 1101–1121, 1151–1171, 1193–1213, 1218–1238, and 1260–1280; these read VAEM…TLFW, YTYV…VMGV, IFIG…FFSF, LGVY…ILNQ, VFSI…TGVY, and FWAV…LFMT. Lys-1275 is a binding site for a 1,2-diacyl-sn-glycero-3-phospho-L-serine.

The protein belongs to the cation transport ATPase (P-type) (TC 3.A.3) family. Type IV subfamily. The cofactor is Mg(2+).

The protein localises to the cell membrane. It localises to the endoplasmic reticulum membrane. It carries out the reaction ATP + H2O + phospholipidSide 1 = ADP + phosphate + phospholipidSide 2.. The catalysed reaction is a 1,2-diacyl-sn-glycero-3-phosphoethanolamine(out) + ATP + H2O = a 1,2-diacyl-sn-glycero-3-phosphoethanolamine(in) + ADP + phosphate + H(+). It catalyses the reaction a 1,2-diacyl-sn-glycero-3-phosphocholine(out) + ATP + H2O = a 1,2-diacyl-sn-glycero-3-phosphocholine(in) + ADP + phosphate + H(+). The enzyme catalyses a beta-D-glucosyl-(1&lt;-&gt;1')-N-acylsphing-4-enine(out) + ATP + H2O = a beta-D-glucosyl-(1&lt;-&gt;1')-N-acylsphing-4-enine(in) + ADP + phosphate + H(+). It carries out the reaction a 1,2-diacyl-sn-glycero-3-phospho-L-serine(out) + ATP + H2O = a 1,2-diacyl-sn-glycero-3-phospho-L-serine(in) + ADP + phosphate + H(+). In terms of biological role, catalytic component of a P4-ATPase flippase complex which catalyzes the hydrolysis of ATP coupled to the transport of glucosylceramide, phosphatidylcholine, phosphatidylethanolamine, and small amounts of phosphatidylserine from the lumenal to the cytosolic leaflet of the cell membrane and ensures the maintenance of asymmetric distribution of phospholipids. The sequence is that of Phospholipid-transporting ATPase dnf2 from Schizosaccharomyces pombe (strain 972 / ATCC 24843) (Fission yeast).